We begin with the raw amino-acid sequence, 66 residues long: MAKSKDARVAVILECTSCIRNSVNKVLTGISRYITQKNRRNTPNRLELRKFCPYCYKHMIHGEIKK.

It belongs to the bacterial ribosomal protein bL33 family.

Its subcellular location is the plastid. This is Large ribosomal subunit protein bL33c (rpl33) from Epifagus virginiana (Beechdrops).